The chain runs to 294 residues: Elongation factor Ts (294 aa).

The segment at 80-83 is involved in Mg(2+) ion dislocation from EF-Tu; sequence TDFV.

It belongs to the EF-Ts family.

The protein resides in the cytoplasm. In terms of biological role, associates with the EF-Tu.GDP complex and induces the exchange of GDP to GTP. It remains bound to the aminoacyl-tRNA.EF-Tu.GTP complex up to the GTP hydrolysis stage on the ribosome. In Polynucleobacter asymbioticus (strain DSM 18221 / CIP 109841 / QLW-P1DMWA-1) (Polynucleobacter necessarius subsp. asymbioticus), this protein is Elongation factor Ts.